The primary structure comprises 215 residues: E3 ubiquitin-protein ligase NleG (215 aa).

Residues 136 to 189 (CPITLCIPETGVFVRNAKNSEICSLYDHNALTELIRRNAPHPLSREPFVPEMIV) form an RING/U-box domain region. The PDZ-binding motif motif lies at 213-215 (TRI).

It belongs to the NleG E3 ligase family. Interacts with host GOPC (human protein). Post-translationally, two sizes of protein are detected upon expression in C.rodentium; only the smaller protein is secreted.

It localises to the secreted. The protein localises to the host cytoplasm. It carries out the reaction S-ubiquitinyl-[E2 ubiquitin-conjugating enzyme]-L-cysteine + [acceptor protein]-L-lysine = [E2 ubiquitin-conjugating enzyme]-L-cysteine + N(6)-ubiquitinyl-[acceptor protein]-L-lysine.. In terms of biological role, effector proteins function to alter host cell physiology and promote bacterial survival in host tissues. This protein is an E3 ubiquitin-protein ligase that probably interferes with the host's ubiquitination pathway and targets host proteins for proteasomal degradation. Can ubiquitinate ubiquitin, giving rise to polyubiquitin chains (in vitro). Does not complement an nleG8 deletion in C.rodentium. This is E3 ubiquitin-protein ligase NleG from Escherichia coli O157:H7.